An 884-amino-acid polypeptide reads, in one-letter code: Chitin synthase E (884 aa).

2 disordered regions span residues 1–58 and 73–108; these read MGTP…PAVS and AVFAAPPYQESEAASENTFRARSNGDKASREGSRAG. 2 stretches are compositionally biased toward polar residues: residues 37-48 and 84-93; these read QSLLERNNSSHY and EAASENTFRA. An N-linked (GlcNAc...) asparagine glycan is attached at N44. The segment covering 95-105 has biased composition (basic and acidic residues); sequence SNGDKASREGS. N301 is a glycosylation site (N-linked (GlcNAc...) asparagine). A run of 7 helical transmembrane segments spans residues 513–532, 556–576, 597–617, 635–655, 681–701, 708–728, and 812–832; these read WLNGSFAAGLYAIMHFGRIY, IMTWFSLASYWLTSSVIMDLV, IVNNFVKYGYVWVLTLQFIMA, YFSLVQLYVLILSFYLVVGAF, GGIVLIALVSTYGIYIIASVL, IITSSWAYFLGMTTSINILMV, and VLVCLWVFSNLLVTLLITATG. The N-linked (GlcNAc...) asparagine glycan is linked to N840. A helical membrane pass occupies residues 852–872; it reads VILWITAGLSLFRFIGSLWFL.

Belongs to the chitin synthase family. Class III subfamily.

The protein localises to the cell membrane. It catalyses the reaction [(1-&gt;4)-N-acetyl-beta-D-glucosaminyl](n) + UDP-N-acetyl-alpha-D-glucosamine = [(1-&gt;4)-N-acetyl-beta-D-glucosaminyl](n+1) + UDP + H(+). In terms of biological role, polymerizes chitin, a structural polymer of the cell wall and septum, by transferring the sugar moiety of UDP-GlcNAc to the non-reducing end of the growing chitin polymer. Plays an important role in septal growth or maintenance. Mediates colony spore formation. ChsE and chsD seem to play a functionally redundant role in lateral cell wall chitin synthesis. Involved in resistance to echinocandins. The protein is Chitin synthase E of Aspergillus niger (strain ATCC MYA-4892 / CBS 513.88 / FGSC A1513).